A 450-amino-acid polypeptide reads, in one-letter code: Adenosylhomocysteinase (450 aa).

Substrate is bound by residues Thr59, Asp135, and Glu160. 161–163 (TTT) contacts NAD(+). Residues Lys190 and Asp194 each coordinate substrate. NAD(+)-binding positions include Asn195, 224-229 (GFGDVG), Glu247, 303-305 (IGH), and Asn350.

It belongs to the adenosylhomocysteinase family. The cofactor is NAD(+).

The protein resides in the cytoplasm. The catalysed reaction is S-adenosyl-L-homocysteine + H2O = L-homocysteine + adenosine. It functions in the pathway amino-acid biosynthesis; L-homocysteine biosynthesis; L-homocysteine from S-adenosyl-L-homocysteine: step 1/1. In terms of biological role, adenosylhomocysteine is a competitive inhibitor of S-adenosyl-L-methionine-dependent methyl transferase reactions; therefore adenosylhomocysteinase may play a key role in the control of methylations via regulation of the intracellular concentration of adenosylhomocysteine. The protein is Adenosylhomocysteinase (SAH1) of Candida albicans (strain SC5314 / ATCC MYA-2876) (Yeast).